The chain runs to 486 residues: Malonate-semialdehyde dehydrogenase 1 (486 aa).

Residues Phe154, Lys178, Glu181, Arg182, and Ser231 each coordinate NAD(+). Residue Cys286 is the Nucleophile of the active site. Glu386 is an NAD(+) binding site.

The protein belongs to the aldehyde dehydrogenase family. IolA subfamily. Homotetramer.

The catalysed reaction is 3-oxopropanoate + NAD(+) + CoA + H2O = hydrogencarbonate + acetyl-CoA + NADH + H(+). It catalyses the reaction 2-methyl-3-oxopropanoate + NAD(+) + CoA + H2O = propanoyl-CoA + hydrogencarbonate + NADH + H(+). It participates in polyol metabolism; myo-inositol degradation into acetyl-CoA; acetyl-CoA from myo-inositol: step 7/7. In terms of biological role, catalyzes the oxidation of malonate semialdehyde (MSA) and methylmalonate semialdehyde (MMSA) into acetyl-CoA and propanoyl-CoA, respectively. Is involved in a myo-inositol catabolic pathway. Bicarbonate, and not CO2, is the end-product of the enzymatic reaction. In Oceanobacillus iheyensis (strain DSM 14371 / CIP 107618 / JCM 11309 / KCTC 3954 / HTE831), this protein is Malonate-semialdehyde dehydrogenase 1.